The primary structure comprises 63 residues: Large ribosomal subunit protein uL29 (63 aa).

Belongs to the universal ribosomal protein uL29 family.

In Shigella flexneri, this protein is Large ribosomal subunit protein uL29.